A 395-amino-acid chain; its full sequence is uncharacterized protein (395 aa).

Positions 286–306 are enriched in low complexity; that stretch reads SSNKSSESTMTSPLDSASSLH. Positions 286–395 are disordered; the sequence is SSNKSSESTM…RNDDSGLESV (110 aa). Positions 350 to 362 are enriched in pro residues; that stretch reads RPPPPSVHPPIFP. A compositionally biased stretch (polar residues) spans 364-385; it reads QTQLFHPPTYSTQRHVTSPNSS.

This is an uncharacterized protein from Caenorhabditis elegans.